Reading from the N-terminus, the 384-residue chain is 8-amino-7-oxononanoate synthase (384 aa).

Arginine 21 serves as a coordination point for substrate. Residue 108-109 (GF) coordinates pyridoxal 5'-phosphate. Substrate is bound at residue histidine 133. 3 residues coordinate pyridoxal 5'-phosphate: serine 179, histidine 207, and threonine 233. Lysine 236 is modified (N6-(pyridoxal phosphate)lysine). Threonine 352 contacts substrate.

It belongs to the class-II pyridoxal-phosphate-dependent aminotransferase family. BioF subfamily. In terms of assembly, homodimer. It depends on pyridoxal 5'-phosphate as a cofactor.

It catalyses the reaction 6-carboxyhexanoyl-[ACP] + L-alanine + H(+) = (8S)-8-amino-7-oxononanoate + holo-[ACP] + CO2. Its pathway is cofactor biosynthesis; biotin biosynthesis. Functionally, catalyzes the decarboxylative condensation of pimeloyl-[acyl-carrier protein] and L-alanine to produce 8-amino-7-oxononanoate (AON), [acyl-carrier protein], and carbon dioxide. The chain is 8-amino-7-oxononanoate synthase from Escherichia coli (strain SE11).